The primary structure comprises 317 residues: Dimethyladenosine transferase (317 aa).

The disordered stretch occupies residues 1–22; the sequence is MAKAPAKKFSGGAQRESAGGEQ. The S-adenosyl-L-methionine site is built by His-37, Leu-39, Gly-64, Glu-85, Asp-113, and Asn-128.

Belongs to the class I-like SAM-binding methyltransferase superfamily. rRNA adenine N(6)-methyltransferase family.

It catalyses the reaction adenosine(1779)/adenosine(1780) in 18S rRNA + 4 S-adenosyl-L-methionine = N(6)-dimethyladenosine(1779)/N(6)-dimethyladenosine(1780) in 18S rRNA + 4 S-adenosyl-L-homocysteine + 4 H(+). In terms of biological role, specifically dimethylates two adjacent adenosines in the loop of a conserved hairpin near the 3'-end of 18S rRNA in the 40S particle. The protein is Dimethyladenosine transferase (DIM1) of Yarrowia lipolytica (strain CLIB 122 / E 150) (Yeast).